The chain runs to 238 residues: MIAFIVLLSLAAVLQQSSGTVDFASESSNKKDYQREIVDKHNALRRSVKPTARNMLQMKWNSHAAQNAKRSADRCTFAHSPEHTRTVGKFRCGENIFMSSQPFAWSGVVQAWYDEIKNFVYGIGAKPPGSVIGHYTQIVWYKSHLLGCASAKCSSTKYLYVCQYCPAGNIRSSIATPYKSGPSCGDCPSACVNGLCTNPCEYEDAYTNCNDLVKERKCQTEWIKSQCPATCFCHNKII.

The first 19 residues, 1-19 (MIAFIVLLSLAAVLQQSSG), serve as a signal peptide directing secretion. The region spanning 38–164 (VDKHNALRRS…STKYLYVCQY (127 aa)) is the SCP domain. Intrachain disulfides connect Cys75–Cys153, Cys92–Cys165, Cys148–Cys162, Cys184–Cys191, Cys187–Cys196, Cys200–Cys233, Cys209–Cys227, and Cys218–Cys231. The region spanning 200–233 (CEYEDAYTNCNDLVKERKCQTEWIKSQCPATCFC) is the ShKT domain.

It belongs to the CRISP family. In terms of tissue distribution, expressed by the venom gland.

It is found in the secreted. Blocks contraction of smooth muscle elicited by high potassium-induced depolarization, but does not block caffeine-stimulated contraction. May target voltage-gated calcium channels (Cav) on smooth muscle. The sequence is that of Cysteine-rich venom protein 2 from Hydrophis hardwickii (Hardwick's spine-bellied seasnake).